A 464-amino-acid chain; its full sequence is Glutamate--tRNA ligase (464 aa).

The 'HIGH' region signature appears at 9–19; it reads PSPTGYLHIGG. The 'KMSKS' region motif lies at 242-246; sequence KISKR. ATP is bound at residue lysine 245.

It belongs to the class-I aminoacyl-tRNA synthetase family. Glutamate--tRNA ligase type 1 subfamily. Monomer.

The protein localises to the cytoplasm. It catalyses the reaction tRNA(Glu) + L-glutamate + ATP = L-glutamyl-tRNA(Glu) + AMP + diphosphate. In terms of biological role, catalyzes the attachment of glutamate to tRNA(Glu) in a two-step reaction: glutamate is first activated by ATP to form Glu-AMP and then transferred to the acceptor end of tRNA(Glu). The chain is Glutamate--tRNA ligase from Neisseria meningitidis serogroup B (strain ATCC BAA-335 / MC58).